Here is a 255-residue protein sequence, read N- to C-terminus: Geranylgeranylglyceryl phosphate synthase (255 aa).

Asp25 and Ser54 together coordinate Mg(2+). Sn-glycerol 1-phosphate-binding positions include 173–179 (YLEGGSG), 203–204 (GG), and 225–226 (GT).

The protein belongs to the GGGP/HepGP synthase family. Group II subfamily. Mg(2+) is required as a cofactor.

It localises to the cytoplasm. It carries out the reaction sn-glycerol 1-phosphate + (2E,6E,10E)-geranylgeranyl diphosphate = sn-3-O-(geranylgeranyl)glycerol 1-phosphate + diphosphate. It functions in the pathway membrane lipid metabolism; glycerophospholipid metabolism. Prenyltransferase that catalyzes the transfer of the geranylgeranyl moiety of geranylgeranyl diphosphate (GGPP) to the C3 hydroxyl of sn-glycerol-1-phosphate (G1P). This reaction is the first ether-bond-formation step in the biosynthesis of archaeal membrane lipids. The chain is Geranylgeranylglyceryl phosphate synthase from Thermofilum pendens (strain DSM 2475 / Hrk 5).